Here is a 248-residue protein sequence, read N- to C-terminus: Cytochrome c oxidase subunit 2 (248 aa).

The first 12 residues, 1-12 (MLLMNLFTIINN), serve as a signal peptide directing secretion. Residues 13-39 (DVPTPYNMYFQDSTTPHQEGILELHDN) are Mitochondrial intermembrane-facing. The chain crosses the membrane as a helical span at residues 40–61 (IMFYMLTVLGLVSWMMIIIIKD). Residues 62-79 (YKNNPITYKYIKHGQMIE) lie on the Mitochondrial matrix side of the membrane. Residues 80 to 104 (IIWTILPAIILLMIAFPSFILLYLC) traverse the membrane as a helical segment. Residues 105–248 (DEVISPAMTI…PTFLTWLNEQ (144 aa)) are Mitochondrial intermembrane-facing. 6 residues coordinate Cu cation: histidine 183, cysteine 218, glutamate 220, cysteine 222, histidine 226, and methionine 229. Glutamate 220 provides a ligand contact to Mg(2+).

This sequence belongs to the cytochrome c oxidase subunit 2 family. Component of the cytochrome c oxidase (complex IV, CIV), a multisubunit enzyme composed of a catalytic core of 3 subunits and several supernumerary subunits. The complex exists as a monomer or a dimer and forms supercomplexes (SCs) in the inner mitochondrial membrane with ubiquinol-cytochrome c oxidoreductase (cytochrome b-c1 complex, complex III, CIII). Cu cation is required as a cofactor. In terms of processing, the signal sequence of COX2 is processed by IMP1.

Its subcellular location is the mitochondrion inner membrane. The enzyme catalyses 4 Fe(II)-[cytochrome c] + O2 + 8 H(+)(in) = 4 Fe(III)-[cytochrome c] + 2 H2O + 4 H(+)(out). Its function is as follows. Component of the cytochrome c oxidase, the last enzyme in the mitochondrial electron transport chain which drives oxidative phosphorylation. The respiratory chain contains 3 multisubunit complexes succinate dehydrogenase (complex II, CII), ubiquinol-cytochrome c oxidoreductase (cytochrome b-c1 complex, complex III, CIII) and cytochrome c oxidase (complex IV, CIV), that cooperate to transfer electrons derived from NADH and succinate to molecular oxygen, creating an electrochemical gradient over the inner membrane that drives transmembrane transport and the ATP synthase. Cytochrome c oxidase is the component of the respiratory chain that catalyzes the reduction of oxygen to water. Electrons originating from reduced cytochrome c in the intermembrane space (IMS) are transferred via the dinuclear copper A center (CU(A)) of subunit 2 and heme A of subunit 1 to the active site in subunit 1, a binuclear center (BNC) formed by heme A3 and copper B (CU(B)). The BNC reduces molecular oxygen to 2 water molecules using 4 electrons from cytochrome c in the IMS and 4 protons from the mitochondrial matrix. The polypeptide is Cytochrome c oxidase subunit 2 (COX2) (Eremothecium gossypii (strain ATCC 10895 / CBS 109.51 / FGSC 9923 / NRRL Y-1056) (Yeast)).